The chain runs to 418 residues: Actin-related protein 3 (418 aa).

Belongs to the actin family. ARP3 subfamily. In terms of assembly, component of the Arp2/3 complex.

The protein resides in the cytoplasm. The protein localises to the cytoskeleton. Functionally, functions as ATP-binding component of the Arp2/3 complex which is involved in regulation of actin polymerization and together with an activating nucleation-promoting factor (NPF) mediates the formation of branched actin networks. Seems to contact the pointed end of the daughter actin filament. Required during embryogenesis for the developmental migration of tail hemocytes anteriorly, along the ventral midline. This is Actin-related protein 3 from Drosophila melanogaster (Fruit fly).